Consider the following 352-residue polypeptide: uncharacterized protein (352 aa).

N-linked (GlcNAc...) asparagine glycosylation is found at Asn-14, Asn-52, and Asn-70. The segment at 41-73 is disordered; the sequence is LSDYKKNKDTLNNSNNNINQPFENSNNFNNNSK. Over residues 50 to 72 the composition is skewed to low complexity; it reads TLNNSNNNINQPFENSNNFNNNS. Residues 131-151 form a helical membrane-spanning segment; the sequence is IIFKSSGLLITLLVLYLGTFF. N-linked (GlcNAc...) asparagine glycans are attached at residues Asn-165, Asn-186, Asn-192, Asn-193, Asn-203, and Asn-289. The segment covering 193-213 has biased composition (low complexity); sequence NSSNSNNNNINNSNNNNNNNN. The interval 193 to 219 is disordered; the sequence is NSSNSNNNNINNSNNNNNNNNRILSPN.

It is found in the membrane. This is an uncharacterized protein from Dictyostelium discoideum (Social amoeba).